Consider the following 158-residue polypeptide: Transcription elongation factor GreA (158 aa).

Belongs to the GreA/GreB family.

In terms of biological role, necessary for efficient RNA polymerase transcription elongation past template-encoded arresting sites. The arresting sites in DNA have the property of trapping a certain fraction of elongating RNA polymerases that pass through, resulting in locked ternary complexes. Cleavage of the nascent transcript by cleavage factors such as GreA or GreB allows the resumption of elongation from the new 3'terminus. GreA releases sequences of 2 to 3 nucleotides. This Salmonella typhi protein is Transcription elongation factor GreA.